The sequence spans 99 residues: Biogenesis of lysosome-related organelles complex 1 subunit SNN1 (99 aa).

The stretch at 34–94 forms a coiled coil; sequence SINELRESQA…VVLKRYEKMV (61 aa).

It belongs to the SNAPIN family. In terms of assembly, component of the biogenesis of lysosome-related organelles complex-1 (BLOC-1).

The protein localises to the endosome. Functionally, component of the biogenesis of lysosome-related organelles complex-1 (BLOC-1), a complex involved in endosomal cargo sorting. The sequence is that of Biogenesis of lysosome-related organelles complex 1 subunit SNN1 (SNN1) from Kluyveromyces lactis (strain ATCC 8585 / CBS 2359 / DSM 70799 / NBRC 1267 / NRRL Y-1140 / WM37) (Yeast).